A 160-amino-acid polypeptide reads, in one-letter code: Ubiquitin-like protein ATG12 (160 aa).

Residues 1–40 form a disordered region; it reads MSETPKDQGPSSPSPSPSPSAASPMPLADNEVAGSGASSP. A Glycyl lysine isopeptide (Gly-Lys) (interchain with K-102 in ATG5) cross-link involves residue glycine 160.

It belongs to the ATG12 family. As to quaternary structure, forms a conjugate with ATG5. Forms a thioester bond with the 'Cys-196' of ATG10. Interacts with the ATG7 C-terminal 40 amino acids domain. The ATG12-ATG5 conjugate forms a complex with several units of ATG16. The ATG12-ATG5 conjugate also associates with ATG3.

It localises to the preautophagosomal structure membrane. In terms of biological role, ubiquitin-like protein involved in cytoplasm to vacuole transport (Cvt), autophagy vesicles formation, mitophagy, and nucleophagy. Conjugation with ATG5 through a ubiquitin-like conjugating system involving also ATG7 as an E1-like activating enzyme and ATG10 as an E2-like conjugating enzyme, is essential for its function. The ATG12-ATG5 conjugate acts as an E3-like enzyme which is required for lipidation of ATG8 and ATG8 association to the vesicle membranes. ATG12-ATG5 rearranges the ATG3 catalytic center and enhances its E2 activity. Autophagy is required for proper vegetative growth, asexual/sexual reproduction, and full virulence. Autophagy is particularly involved in the biosynthesis of deoxynivalenol (DON), an important virulence determinant. The protein is Ubiquitin-like protein ATG12 of Gibberella zeae (strain ATCC MYA-4620 / CBS 123657 / FGSC 9075 / NRRL 31084 / PH-1) (Wheat head blight fungus).